Here is a 968-residue protein sequence, read N- to C-terminus: RNA polymerase-associated protein RapA (968 aa).

Residues 164-334 (EVGQRHAPRV…FARLRLLDPN (171 aa)) form the Helicase ATP-binding domain. 177 to 184 (DEVGLGKT) contacts ATP. The DEAH box signature appears at 280–283 (DEAH). In terms of domain architecture, Helicase C-terminal spans 493-644 (WLVDFLLDLR…TCPTGRALYD (152 aa)).

This sequence belongs to the SNF2/RAD54 helicase family. RapA subfamily. As to quaternary structure, interacts with the RNAP. Has a higher affinity for the core RNAP than for the holoenzyme. Its ATPase activity is stimulated by binding to RNAP.

Its function is as follows. Transcription regulator that activates transcription by stimulating RNA polymerase (RNAP) recycling in case of stress conditions such as supercoiled DNA or high salt concentrations. Probably acts by releasing the RNAP, when it is trapped or immobilized on tightly supercoiled DNA. Does not activate transcription on linear DNA. Probably not involved in DNA repair. The sequence is that of RNA polymerase-associated protein RapA from Sodalis glossinidius (strain morsitans).